Reading from the N-terminus, the 126-residue chain is Large ribosomal subunit protein bL20 (126 aa).

Belongs to the bacterial ribosomal protein bL20 family.

Functionally, binds directly to 23S ribosomal RNA and is necessary for the in vitro assembly process of the 50S ribosomal subunit. It is not involved in the protein synthesizing functions of that subunit. In Buchnera aphidicola subsp. Baizongia pistaciae (strain Bp), this protein is Large ribosomal subunit protein bL20.